Consider the following 136-residue polypeptide: MEITLPRVSLSLAVLLVIVCSVDAQNYLAFPRMGRSGYLAFPRMGRSHFKSETSADVTGCCGVGIKNEFLIGQDGKEEIRSACGARADCCEGLKEVVDQKNDGVYFSMCVPDITFAQASSVRSSEVFNKLKSLLEK.

A signal peptide spans 1–24; sequence MEITLPRVSLSLAVLLVIVCSVDA. A methionine amide mark is found at M33 and M44. A propeptide spans 47–136 (carboxy-terminal peptide); sequence SHFKSETSAD…FNKLKSLLEK (90 aa).

The protein belongs to the SCP family.

Its subcellular location is the secreted. The cardioactive peptides enhance the contractions of the auricle in vitro. In Lymnaea stagnalis (Great pond snail), this protein is Small cardioactive peptides (SCP).